The primary structure comprises 376 residues: MRSPHRDAIRTARGLVVKVGTTALTTPSGMFDAGRLAGLAEAVERRMKAGSDVVIVSSGAIAAGIEPLGLSRRPKDLATKQAAASVGQVALVNSWSAAFARYGRTVGQVLLTAHDISMRVQHTNAQRTLDRLRALHAVAIVNENDTVATNEIRFGDNDRLSALVAHLVGADALVLLSDIDGLYDCDPRKTADATFIPEVSGPADLDGVVAGRSSHLGTGGMASKVSAALLAADAGVPVLLAPAADAATALADASVGTVFAARPARLSARRFWVRYAAEATGALTLDAGAVRAVVRQRRSLLAAGITAVSGRFCGGDVVELRAPDAAMVARGVVAYDASELATMVGRSTSELPGELRRPVVHADDLVAVSAKQAKQV.

Position 18 (Lys-18) interacts with ATP. Substrate is bound by residues Ser-58, Asp-145, and Asn-157. ATP is bound by residues 177 to 178 (SD) and 218 to 224 (TGGMASK). Residues 280–358 (TGALTLDAGA…SELPGELRRP (79 aa)) form the PUA domain.

Belongs to the glutamate 5-kinase family.

The protein localises to the cytoplasm. It carries out the reaction L-glutamate + ATP = L-glutamyl 5-phosphate + ADP. Its pathway is amino-acid biosynthesis; L-proline biosynthesis; L-glutamate 5-semialdehyde from L-glutamate: step 1/2. Catalyzes the transfer of a phosphate group to glutamate to form L-glutamate 5-phosphate. This chain is Glutamate 5-kinase, found in Mycobacterium tuberculosis (strain CDC 1551 / Oshkosh).